We begin with the raw amino-acid sequence, 211 residues long: Proteasome subunit beta (211 aa).

A propeptide spans 1 to 8 (MNQTLETG) (removed in mature form; by autocatalysis). The Nucleophile role is filled by Thr-9.

This sequence belongs to the peptidase T1B family. As to quaternary structure, the 20S proteasome core is composed of 14 alpha and 14 beta subunits that assemble into four stacked heptameric rings, resulting in a barrel-shaped structure. The two inner rings, each composed of seven catalytic beta subunits, are sandwiched by two outer rings, each composed of seven alpha subunits. The catalytic chamber with the active sites is on the inside of the barrel. Has a gated structure, the ends of the cylinder being occluded by the N-termini of the alpha-subunits. Is capped at one or both ends by the proteasome regulatory ATPase, PAN.

It localises to the cytoplasm. It catalyses the reaction Cleavage of peptide bonds with very broad specificity.. The formation of the proteasomal ATPase PAN-20S proteasome complex, via the docking of the C-termini of PAN into the intersubunit pockets in the alpha-rings, triggers opening of the gate for substrate entry. Interconversion between the open-gate and close-gate conformations leads to a dynamic regulation of the 20S proteasome proteolysis activity. In terms of biological role, component of the proteasome core, a large protease complex with broad specificity involved in protein degradation. The T.acidophilum proteasome is able to cleave oligopeptides after Tyr, Leu, Phe, and to a lesser extent after Glu and Arg. Thus, displays chymotrypsin-like activity and low level of caspase-like and trypsin-like activities. The protein is Proteasome subunit beta of Thermoplasma acidophilum (strain ATCC 25905 / DSM 1728 / JCM 9062 / NBRC 15155 / AMRC-C165).